Here is a 215-residue protein sequence, read N- to C-terminus: Glycerol-3-phosphate acyltransferase (215 aa).

The next 6 helical transmembrane spans lie at L3–G23, T42–I61, T68–L90, A110–L130, L134–L154, and L162–I182.

It belongs to the PlsY family. Probably interacts with PlsX.

The protein resides in the cell membrane. The enzyme catalyses an acyl phosphate + sn-glycerol 3-phosphate = a 1-acyl-sn-glycero-3-phosphate + phosphate. It functions in the pathway lipid metabolism; phospholipid metabolism. In terms of biological role, catalyzes the transfer of an acyl group from acyl-phosphate (acyl-PO(4)) to glycerol-3-phosphate (G3P) to form lysophosphatidic acid (LPA). This enzyme utilizes acyl-phosphate as fatty acyl donor, but not acyl-CoA or acyl-ACP. The chain is Glycerol-3-phosphate acyltransferase from Streptococcus equi subsp. zooepidemicus (strain H70).